The following is a 684-amino-acid chain: Glycine--tRNA ligase beta subunit (684 aa).

This sequence belongs to the class-II aminoacyl-tRNA synthetase family. As to quaternary structure, tetramer of two alpha and two beta subunits.

The protein localises to the cytoplasm. The catalysed reaction is tRNA(Gly) + glycine + ATP = glycyl-tRNA(Gly) + AMP + diphosphate. The chain is Glycine--tRNA ligase beta subunit from Pseudomonas savastanoi pv. phaseolicola (strain 1448A / Race 6) (Pseudomonas syringae pv. phaseolicola (strain 1448A / Race 6)).